A 342-amino-acid polypeptide reads, in one-letter code: N-acetyl-gamma-glutamyl-phosphate reductase (342 aa).

Residue Cys-149 is part of the active site.

This sequence belongs to the NAGSA dehydrogenase family. Type 1 subfamily.

The protein resides in the cytoplasm. It catalyses the reaction N-acetyl-L-glutamate 5-semialdehyde + phosphate + NADP(+) = N-acetyl-L-glutamyl 5-phosphate + NADPH + H(+). The protein operates within amino-acid biosynthesis; L-arginine biosynthesis; N(2)-acetyl-L-ornithine from L-glutamate: step 3/4. Catalyzes the NADPH-dependent reduction of N-acetyl-5-glutamyl phosphate to yield N-acetyl-L-glutamate 5-semialdehyde. This is N-acetyl-gamma-glutamyl-phosphate reductase from Nitrosospira multiformis (strain ATCC 25196 / NCIMB 11849 / C 71).